The following is a 335-amino-acid chain: Erlin-2 (335 aa).

Topologically, residues 1–2 (MS) are cytoplasmic. A helical membrane pass occupies residues 3-23 (HAGAIAAIGVALIAAALFSAI). Residues 24–335 (HKIEEGHVGV…ALNEPAVGDE (312 aa)) are Lumenal-facing. Residue asparagine 106 is glycosylated (N-linked (GlcNAc...) asparagine). Polar residues predominate over residues 310–321 (AGPSVQSATLLQ). Residues 310–335 (AGPSVQSATLLQDDSPALNEPAVGDE) are disordered.

The protein belongs to the band 7/mec-2 family.

Its subcellular location is the endoplasmic reticulum membrane. In terms of biological role, mediates the endoplasmic reticulum-associated degradation (ERAD) of inositol 1,4,5-trisphosphate receptors (IP3Rs). Promotes sterol-accelerated ERAD of HMGCR. Involved in regulation of cellular cholesterol homeostasis by regulation the SREBP signaling pathway. This Xenopus tropicalis (Western clawed frog) protein is Erlin-2 (erlin2).